We begin with the raw amino-acid sequence, 349 residues long: Anthranilate phosphoribosyltransferase (349 aa).

Residues G82, 85-86 (GD), 92-95 (NVST), 110-118 (KHGNRGVSS), and S122 contribute to the 5-phospho-alpha-D-ribose 1-diphosphate site. G82 contributes to the anthranilate binding site. S94 provides a ligand contact to Mg(2+). N113 serves as a coordination point for anthranilate. R168 lines the anthranilate pocket. Mg(2+) contacts are provided by D227 and E228.

The protein belongs to the anthranilate phosphoribosyltransferase family. As to quaternary structure, homodimer. Requires Mg(2+) as cofactor.

It carries out the reaction N-(5-phospho-beta-D-ribosyl)anthranilate + diphosphate = 5-phospho-alpha-D-ribose 1-diphosphate + anthranilate. It participates in amino-acid biosynthesis; L-tryptophan biosynthesis; L-tryptophan from chorismate: step 2/5. Functionally, catalyzes the transfer of the phosphoribosyl group of 5-phosphorylribose-1-pyrophosphate (PRPP) to anthranilate to yield N-(5'-phosphoribosyl)-anthranilate (PRA). This is Anthranilate phosphoribosyltransferase from Acinetobacter baylyi (strain ATCC 33305 / BD413 / ADP1).